We begin with the raw amino-acid sequence, 339 residues long: Isopentenyl-diphosphate delta-isomerase (339 aa).

7-8 lines the substrate pocket; it reads RK. FMN is bound by residues S65, 66–68, S96, and N125; that span reads SMT. 96-98 serves as a coordination point for substrate; that stretch reads SQR. Substrate is bound at residue Q160. E161 is a Mg(2+) binding site. FMN-binding positions include K192, T222, and 293–294; that span reads AG.

The protein belongs to the IPP isomerase type 2 family. Homooctamer. Dimer of tetramers. FMN serves as cofactor. NADPH is required as a cofactor. Requires Mg(2+) as cofactor.

The protein resides in the cytoplasm. The enzyme catalyses isopentenyl diphosphate = dimethylallyl diphosphate. In terms of biological role, involved in the biosynthesis of isoprenoids. Catalyzes the 1,3-allylic rearrangement of the homoallylic substrate isopentenyl (IPP) to its allylic isomer, dimethylallyl diphosphate (DMAPP). The protein is Isopentenyl-diphosphate delta-isomerase of Vibrio campbellii (strain ATCC BAA-1116).